The primary structure comprises 388 residues: P2X receptor E (388 aa).

Residues 1–28 (MNFRNIDWDSLFSYSTIKIVRIRDKRLG) lie on the Cytoplasmic side of the membrane. Residues 29-49 (ILHFAFLIGIILYIIVGTIFL) traverse the membrane as a helical segment. Over 50 to 312 (QKKYLVLESP…QLGQFDFQTM (263 aa)) the chain is Lumenal. A pore-forming motif region spans residues 291 to 304 (RHGVRIIFIQTGQL). The chain crosses the membrane as a helical span at residues 313–333 (LLTFVSGIGLVTAASLIVDII). Residues 334 to 388 (ATRIMPQRSRYQELKFQDSSINNTQKTPTNDHTPLLKDNEDTINENSYQNNSYEK) are Cytoplasmic-facing. The segment at 349–388 (FQDSSINNTQKTPTNDHTPLLKDNEDTINENSYQNNSYEK) is disordered. Composition is skewed to polar residues over residues 350–365 (QDSS…TNDH) and 377–388 (NENSYQNNSYEK).

The protein belongs to the P2X receptor family.

It is found in the contractile vacuole membrane. P2X receptors are ATP-gated ion channels that play a role in intracellular calcium signaling. Not required for the purinergic response to extracellular nucleotides. Not essential for osmoregulation. Inward currents evoked by intracellular ATP. ATP analog beta, gamma-imido-ATP is a weak partial agonist of p2xE. Exclusively selective for ATP over other nucleotides. Insensitive to copper and P2 receptor antagonists PPADS and suramin but strongly inhibited by sodium ions. More permeable to ammonium than either sodium or potassium ions and less permeable to choline. Permeable to calcium ions, but not chloride. This chain is P2X receptor E (p2xE), found in Dictyostelium discoideum (Social amoeba).